The primary structure comprises 140 residues: uncharacterized protein (140 aa).

A run of 3 helical transmembrane segments spans residues 42-62, 65-85, and 96-116; these read AFLF…IFAS, ASFL…SALG, and RASD…MLCF.

Its subcellular location is the membrane. This is an uncharacterized protein from Saccharomyces cerevisiae (strain ATCC 204508 / S288c) (Baker's yeast).